Here is a 501-residue protein sequence, read N- to C-terminus: Ribose import ATP-binding protein RbsA (501 aa).

ABC transporter domains lie at 8-245 and 255-500; these read LKMV…VGRT and VKKG…VGIN. 40 to 47 contributes to the ATP binding site; the sequence is GENGAGKS.

This sequence belongs to the ABC transporter superfamily. Ribose importer (TC 3.A.1.2.1) family. As to quaternary structure, the complex is composed of an ATP-binding protein (RbsA), two transmembrane proteins (RbsC) and a solute-binding protein (RbsB).

The protein localises to the cell membrane. It catalyses the reaction D-ribose(out) + ATP + H2O = D-ribose(in) + ADP + phosphate + H(+). Part of the ABC transporter complex RbsABC involved in ribose import. Responsible for energy coupling to the transport system. The sequence is that of Ribose import ATP-binding protein RbsA from Clostridium perfringens (strain 13 / Type A).